Here is a 450-residue protein sequence, read N- to C-terminus: Sensor histidine kinase EnvZ (450 aa).

2 consecutive transmembrane segments (helical) span residues 15-35 and 159-179; these read TLLL…LVVL and PLFR…WLFI. Positions 180–232 constitute an HAMP domain; that stretch reads RIQNRPLVDLEHAALQVGKGIIPPPLREYGASEVRSVTRAFNHMAAGVKQLAD. Residues 223–289 form a cytoplasmic dimerization domain (CDD), when dimerized forms osmosensitive core region; sequence MAAGVKQLAD…IIEQFIDYLR (67 aa). The region spanning 240-440 is the Histidine kinase domain; that stretch reads GVSHDLRTPL…SIRAWLPVPV (201 aa). ATP is bound by residues H243, 347-351, D373, 392-393, and 402-406; these read NAARY, RG, and TGLGL. Phosphohistidine; by autocatalysis is present on H243.

In terms of assembly, homodimer. In terms of processing, autophosphorylated.

The protein localises to the cell inner membrane. The enzyme catalyses ATP + protein L-histidine = ADP + protein N-phospho-L-histidine.. Its function is as follows. Member of the two-component regulatory system EnvZ/OmpR involved in osmoregulation (particularly of genes ompF and ompC) as well as other genes. EnvZ functions as a membrane-associated protein kinase that phosphorylates OmpR in response to environmental signals; at low osmolarity OmpR activates ompF transcription, while at high osmolarity it represses ompF and activates ompC transcription. This chain is Sensor histidine kinase EnvZ (envZ), found in Salmonella typhimurium (strain SL1344).